Reading from the N-terminus, the 348-residue chain is Alcohol dehydrogenase 1 (348 aa).

An N-acetylserine modification is found at serine 2. Cysteine 44 contacts Zn(2+). Positions 45, 46, and 49 each coordinate NAD(+). Zn(2+) contacts are provided by histidine 67, glutamate 68, cysteine 98, cysteine 101, cysteine 104, cysteine 112, and cysteine 154. NAD(+) is bound by residues glycine 181, glycine 182, leucine 183, aspartate 202, and lysine 207. Phosphoserine is present on serine 213. Position 222 (phenylalanine 222) interacts with NAD(+). Threonine 223 is modified (phosphothreonine). Glycyl lysine isopeptide (Lys-Gly) (interchain with G-Cter in ubiquitin) cross-links involve residues lysine 226 and lysine 234. NAD(+) contacts are provided by valine 269 and methionine 271. Serine 279 bears the Phosphoserine mark. Residue lysine 287 forms a Glycyl lysine isopeptide (Lys-Gly) (interchain with G-Cter in ubiquitin) linkage. The NAD(+) site is built by serine 294 and valine 296. A Phosphoserine modification is found at serine 316. Lysine 319 is covalently cross-linked (Glycyl lysine isopeptide (Lys-Gly) (interchain with G-Cter in ubiquitin)). Arginine 341 serves as a coordination point for NAD(+).

It belongs to the zinc-containing alcohol dehydrogenase family. As to quaternary structure, homotetramer. Zn(2+) is required as a cofactor.

Its subcellular location is the cytoplasm. The enzyme catalyses a primary alcohol + NAD(+) = an aldehyde + NADH + H(+). The catalysed reaction is a secondary alcohol + NAD(+) = a ketone + NADH + H(+). It carries out the reaction ethanol + NAD(+) = acetaldehyde + NADH + H(+). It catalyses the reaction allyl alcohol + NADP(+) = acrolein + NADPH + H(+). The enzyme catalyses 1-propanol + NAD(+) = propanal + NADH + H(+). The catalysed reaction is butan-1-ol + NAD(+) = butanal + NADH + H(+). It carries out the reaction hexan-1-ol + NAD(+) = hexanal + NADH + H(+). It catalyses the reaction (R)-lactaldehyde + NAD(+) = methylglyoxal + NADH + H(+). The enzyme catalyses octan-1-ol + NAD(+) = octanal + NADH + H(+). The catalysed reaction is butan-2-ol + NAD(+) = butan-2-one + NADH + H(+). It carries out the reaction propan-2-ol + NAD(+) = acetone + NADH + H(+). It catalyses the reaction isobutanol + NAD(+) = 2-methylpropanal + NADH + H(+). Its function is as follows. Preferentially fermentative isozyme that reduces acetaldehyde to ethanol during the fermentation of glucose. Major enzyme required for the conversion of acetaldehyde to ethanol. Plays a key role in the carbohydrate metabolism through the regeneration of NAD(+) from glycolytic NADH. In the reverse reaction, preferentially catalyzes the conversion of primary unbranched alcohols to their corresponding aldehydes. Also shows activity toward secondary alcohols. Most active with ethanol, and its activity decreases as the size of the alcohol is increased. In Saccharomyces cerevisiae (strain ATCC 204508 / S288c) (Baker's yeast), this protein is Alcohol dehydrogenase 1 (ADH1).